A 432-amino-acid chain; its full sequence is N-acylneuraminate cytidylyltransferase (432 aa).

Residues R39, N49, R98, S107, S109, and Q130 each contribute to the substrate site. Residue R188 is part of the active site.

The protein belongs to the CMP-NeuNAc synthase family. Homotetramer; the active enzyme is formed by a dimer of dimers. As to expression, expressed in testis, ovary and liver.

The protein localises to the nucleus. It carries out the reaction an N-acylneuraminate + CTP = a CMP-N-acyl-beta-neuraminate + diphosphate. It functions in the pathway amino-sugar metabolism; N-acetylneuraminate metabolism. Catalyzes the activation of N-acetylneuraminic acid (NeuNAc) to cytidine 5'-monophosphate N-acetylneuraminic acid (CMP-NeuNAc), a substrate required for the addition of sialic acid. The polypeptide is N-acylneuraminate cytidylyltransferase (cmas) (Oncorhynchus mykiss (Rainbow trout)).